The sequence spans 91 residues: Small ribosomal subunit protein uS15c (91 aa).

Belongs to the universal ribosomal protein uS15 family. As to quaternary structure, part of the 30S ribosomal subunit.

Its subcellular location is the plastid. The protein resides in the chloroplast. The sequence is that of Small ribosomal subunit protein uS15c (rps15) from Eucalyptus globulus subsp. globulus (Tasmanian blue gum).